The chain runs to 224 residues: AAVQPLSVSDAMGARVDAQAWRVDRLTKQFQAISDAADTSIGAAKSGGDIARHMLNSHLDDHWCPSKYHRCGNSPQCMSNMAFCDGVNDCKNHFDEDENRCVVPVTANSTWIGYPAYDHCTQRRPYEMVISITSAPSDIVYKVHQPLKVQVDLFSKKGGLKQSASLHGDAVYCKGSQRLIVAPPEDDRLEIIGQFDGVSNDRFKGYIVREMSGDKCAEFRFFKQ.

An LDL-receptor class A domain is found at 62–103 (HWCPSKYHRCGNSPQCMSNMAFCDGVNDCKNHFDEDENRCVV). Disulfide bonds link cysteine 64–cysteine 77, cysteine 71–cysteine 90, and cysteine 84–cysteine 101. N-linked (GlcNAc...) asparagine glycosylation occurs at asparagine 108.

In terms of assembly, giant hemoglobin is composed of four heme-containing chains (AI to AIV), and two linker chains (AV and AVI).

In terms of biological role, acts as a linker for the assembly of heme-containing chains in the construction of giant hemoglobin. The protein is Giant hemoglobin linker AV-1 chain of Lamellibrachia sp. (Deep-sea giant tube worm).